Consider the following 411-residue polypeptide: tRNA pseudouridine synthase Pus10 (411 aa).

The THUMP domain maps to 65 to 192 (ALAKCHLPTR…SGQVKVVRNP (128 aa)). The Nucleophile role is filled by D244. Substrate is bound by residues Y305 and Y376.

This sequence belongs to the pseudouridine synthase Pus10 family.

The catalysed reaction is uridine(54) in tRNA = pseudouridine(54) in tRNA. The enzyme catalyses uridine(55) in tRNA = pseudouridine(55) in tRNA. In terms of biological role, responsible for synthesis of pseudouridine from uracil-54 and uracil-55 in the psi GC loop of transfer RNAs. The sequence is that of tRNA pseudouridine synthase Pus10 from Pyrobaculum arsenaticum (strain DSM 13514 / JCM 11321 / PZ6).